The primary structure comprises 419 residues: UDP-N-acetylglucosamine 1-carboxyvinyltransferase (419 aa).

Residue 22-23 (KN) participates in phosphoenolpyruvate binding. Arg-93 lines the UDP-N-acetyl-alpha-D-glucosamine pocket. The active-site Proton donor is the Cys-117. Cys-117 carries the post-translational modification 2-(S-cysteinyl)pyruvic acid O-phosphothioketal. Residues Asp-307 and Ile-329 each coordinate UDP-N-acetyl-alpha-D-glucosamine.

The protein belongs to the EPSP synthase family. MurA subfamily.

It is found in the cytoplasm. It carries out the reaction phosphoenolpyruvate + UDP-N-acetyl-alpha-D-glucosamine = UDP-N-acetyl-3-O-(1-carboxyvinyl)-alpha-D-glucosamine + phosphate. Its pathway is cell wall biogenesis; peptidoglycan biosynthesis. In terms of biological role, cell wall formation. Adds enolpyruvyl to UDP-N-acetylglucosamine. This is UDP-N-acetylglucosamine 1-carboxyvinyltransferase from Shewanella putrefaciens (strain CN-32 / ATCC BAA-453).